The chain runs to 198 residues: NADH-quinone oxidoreductase subunit B 1 (198 aa).

[4Fe-4S] cluster is bound by residues Cys-77, Cys-78, Cys-142, and Cys-172.

The protein belongs to the complex I 20 kDa subunit family. In terms of assembly, NDH-1 is composed of 14 different subunits. Subunits NuoB, C, D, E, F, and G constitute the peripheral sector of the complex. The cofactor is [4Fe-4S] cluster.

It localises to the cell inner membrane. It carries out the reaction a quinone + NADH + 5 H(+)(in) = a quinol + NAD(+) + 4 H(+)(out). In terms of biological role, NDH-1 shuttles electrons from NADH, via FMN and iron-sulfur (Fe-S) centers, to quinones in the respiratory chain. The immediate electron acceptor for the enzyme in this species is believed to be ubiquinone. Couples the redox reaction to proton translocation (for every two electrons transferred, four hydrogen ions are translocated across the cytoplasmic membrane), and thus conserves the redox energy in a proton gradient. The polypeptide is NADH-quinone oxidoreductase subunit B 1 (Rhodopseudomonas palustris (strain ATCC BAA-98 / CGA009)).